Reading from the N-terminus, the 194-residue chain is dCTP deaminase (194 aa).

DCTP contacts are provided by residues arginine 110–arginine 115, aspartate 128, valine 136–glutamate 138, tyrosine 171, lysine 178, and glutamine 182. Glutamate 138 (proton donor/acceptor) is an active-site residue. The disordered stretch occupies residues tyrosine 171 to serine 194.

This sequence belongs to the dCTP deaminase family. In terms of assembly, homotrimer.

It carries out the reaction dCTP + H2O + H(+) = dUTP + NH4(+). It functions in the pathway pyrimidine metabolism; dUMP biosynthesis; dUMP from dCTP (dUTP route): step 1/2. Catalyzes the deamination of dCTP to dUTP. This Shewanella amazonensis (strain ATCC BAA-1098 / SB2B) protein is dCTP deaminase.